A 1168-amino-acid polypeptide reads, in one-letter code: Transcription-repair-coupling factor (1168 aa).

The Helicase ATP-binding domain occupies 633–794 (DMQKSRPMDR…MLGVRDLSVI (162 aa)). Position 646-653 (646-653 (GDVGYGKT)) interacts with ATP. The short motif at 747–750 (DEEQ) is the DEEQ box element. Positions 808–969 (VLEQNMSFIK…GFKIAMRDLN (162 aa)) constitute a Helicase C-terminal domain.

It in the N-terminal section; belongs to the UvrB family. This sequence in the C-terminal section; belongs to the helicase family. RecG subfamily.

Its subcellular location is the cytoplasm. Functionally, couples transcription and DNA repair by recognizing RNA polymerase (RNAP) stalled at DNA lesions. Mediates ATP-dependent release of RNAP and its truncated transcript from the DNA, and recruitment of nucleotide excision repair machinery to the damaged site. The polypeptide is Transcription-repair-coupling factor (Staphylococcus aureus (strain bovine RF122 / ET3-1)).